A 104-amino-acid polypeptide reads, in one-letter code: Protein RnfH (104 aa).

It belongs to the UPF0125 (RnfH) family.

This is Protein RnfH from Pseudomonas savastanoi pv. phaseolicola (strain 1448A / Race 6) (Pseudomonas syringae pv. phaseolicola (strain 1448A / Race 6)).